We begin with the raw amino-acid sequence, 230 residues long: uncharacterized protein (230 aa).

Residues 118–195 (LLDEILPKEP…SKREMERLER (78 aa)) form a disordered region. A compositionally biased stretch (basic residues) spans 136–146 (QKKKEKRAALK). Basic and acidic residues-rich tracts occupy residues 160 to 170 (ETDLYGDRDSF) and 179 to 195 (QRSE…RLER).

This is an uncharacterized protein from Schizosaccharomyces pombe (strain 972 / ATCC 24843) (Fission yeast).